A 215-amino-acid chain; its full sequence is Glutathione S-transferase F10 (215 aa).

The 80-residue stretch at Val-2–Gly-81 folds into the GST N-terminal domain. Glutathione is bound by residues Ala-11–Ser-12, Gln-39–Arg-40, Lys-52–Ile-53, and Glu-65–Ser-66. Positions Thr-88–Val-215 constitute a GST C-terminal domain.

It belongs to the GST superfamily. Phi family. As to quaternary structure, interacts with BAK1. In terms of tissue distribution, expressed in roots, stems, floral buds, mature flowers and leaves.

It localises to the cytoplasm. Its subcellular location is the cytosol. It catalyses the reaction RX + glutathione = an S-substituted glutathione + a halide anion + H(+). In terms of biological role, in vitro, possesses glutathione S-transferase activity toward 1-chloro-2,4-dinitrobenzene (CDNB) and benzyl isothiocyanate (BITC). May be involved in the conjugation of reduced glutathione to a wide number of exogenous and endogenous hydrophobic electrophiles and have a detoxification role against certain herbicides. In Arabidopsis thaliana (Mouse-ear cress), this protein is Glutathione S-transferase F10.